The sequence spans 379 residues: UDP-N-acetylglucosamine--N-acetylmuramyl-(pentapeptide) pyrophosphoryl-undecaprenol N-acetylglucosamine transferase (379 aa).

Residues 19-21, asparagine 133, arginine 174, serine 207, isoleucine 261, and glutamine 306 each bind UDP-N-acetyl-alpha-D-glucosamine; that span reads TGG.

This sequence belongs to the glycosyltransferase 28 family. MurG subfamily.

The protein localises to the cell inner membrane. The catalysed reaction is di-trans,octa-cis-undecaprenyl diphospho-N-acetyl-alpha-D-muramoyl-L-alanyl-D-glutamyl-meso-2,6-diaminopimeloyl-D-alanyl-D-alanine + UDP-N-acetyl-alpha-D-glucosamine = di-trans,octa-cis-undecaprenyl diphospho-[N-acetyl-alpha-D-glucosaminyl-(1-&gt;4)]-N-acetyl-alpha-D-muramoyl-L-alanyl-D-glutamyl-meso-2,6-diaminopimeloyl-D-alanyl-D-alanine + UDP + H(+). It functions in the pathway cell wall biogenesis; peptidoglycan biosynthesis. In terms of biological role, cell wall formation. Catalyzes the transfer of a GlcNAc subunit on undecaprenyl-pyrophosphoryl-MurNAc-pentapeptide (lipid intermediate I) to form undecaprenyl-pyrophosphoryl-MurNAc-(pentapeptide)GlcNAc (lipid intermediate II). In Porphyromonas gingivalis (strain ATCC BAA-308 / W83), this protein is UDP-N-acetylglucosamine--N-acetylmuramyl-(pentapeptide) pyrophosphoryl-undecaprenol N-acetylglucosamine transferase.